Consider the following 50-residue polypeptide: Parvalbumin (50 aa).

One can recognise an EF-hand domain in the interval 38–50; sequence KTHEQVKKVFNIL.

The protein belongs to the parvalbumin family.

Probably regulates the activity of the caudal neurosecretory system. Binds two calcium ions. This is Parvalbumin from Scyliorhinus canicula (Small-spotted catshark).